A 680-amino-acid polypeptide reads, in one-letter code: DNA-directed RNA polymerase subunit beta' (680 aa).

Zn(2+) is bound by residues cysteine 69, cysteine 71, cysteine 87, and cysteine 90. Mg(2+) is bound by residues aspartate 489, aspartate 491, and aspartate 493.

This sequence belongs to the RNA polymerase beta' chain family. RpoC1 subfamily. In terms of assembly, in plastids the minimal PEP RNA polymerase catalytic core is composed of four subunits: alpha, beta, beta', and beta''. When a (nuclear-encoded) sigma factor is associated with the core the holoenzyme is formed, which can initiate transcription. Mg(2+) is required as a cofactor. Requires Zn(2+) as cofactor.

Its subcellular location is the plastid. The protein localises to the chloroplast. It catalyses the reaction RNA(n) + a ribonucleoside 5'-triphosphate = RNA(n+1) + diphosphate. DNA-dependent RNA polymerase catalyzes the transcription of DNA into RNA using the four ribonucleoside triphosphates as substrates. The protein is DNA-directed RNA polymerase subunit beta' of Citrus sinensis (Sweet orange).